The sequence spans 184 residues: ATP synthase subunit delta (184 aa).

Belongs to the ATPase delta chain family. As to quaternary structure, F-type ATPases have 2 components, F(1) - the catalytic core - and F(0) - the membrane proton channel. F(1) has five subunits: alpha(3), beta(3), gamma(1), delta(1), epsilon(1). CF(0) has four main subunits: a(1), b(1), b'(1) and c(10-14). The alpha and beta chains form an alternating ring which encloses part of the gamma chain. F(1) is attached to F(0) by a central stalk formed by the gamma and epsilon chains, while a peripheral stalk is formed by the delta, b and b' chains.

Its subcellular location is the cell inner membrane. Functionally, f(1)F(0) ATP synthase produces ATP from ADP in the presence of a proton or sodium gradient. F-type ATPases consist of two structural domains, F(1) containing the extramembraneous catalytic core and F(0) containing the membrane proton channel, linked together by a central stalk and a peripheral stalk. During catalysis, ATP synthesis in the catalytic domain of F(1) is coupled via a rotary mechanism of the central stalk subunits to proton translocation. In terms of biological role, this protein is part of the stalk that links CF(0) to CF(1). It either transmits conformational changes from CF(0) to CF(1) or is implicated in proton conduction. The sequence is that of ATP synthase subunit delta from Erythrobacter litoralis (strain HTCC2594).